Here is a 713-residue protein sequence, read N- to C-terminus: Probable arginine--tRNA ligase, cytoplasmic (713 aa).

Residues 74 to 113 (KNKKNGVKATSTSSPSSSTSAPAEKKAKKDGKTGGAPPKQ) form a disordered region. Low complexity predominate over residues 81–95 (KATSTSSPSSSTSAP). Residues 96–105 (AEKKAKKDGK) show a composition bias toward basic and acidic residues. Residues 252–254 (SPN), histidine 263, tyrosine 438, aspartate 442, and glutamine 466 contribute to the L-arginine site. Residues 252–263 (SPNIAKEMHVGH) carry the 'HIGH' region motif. Residues 583 to 597 (NTAVYLLYAYTRIQS) are interaction with tRNA.

This sequence belongs to the class-I aminoacyl-tRNA synthetase family.

Its subcellular location is the cytoplasm. The protein localises to the cytosol. The enzyme catalyses tRNA(Arg) + L-arginine + ATP = L-arginyl-tRNA(Arg) + AMP + diphosphate. Functionally, forms part of a macromolecular complex that catalyzes the attachment of specific amino acids to cognate tRNAs during protein synthesis. The polypeptide is Probable arginine--tRNA ligase, cytoplasmic (Caenorhabditis elegans).